We begin with the raw amino-acid sequence, 201 residues long: ATP-dependent Clp protease proteolytic subunit (201 aa).

S98 acts as the Nucleophile in catalysis. Residue H123 is part of the active site.

It belongs to the peptidase S14 family. In terms of assembly, fourteen ClpP subunits assemble into 2 heptameric rings which stack back to back to give a disk-like structure with a central cavity, resembling the structure of eukaryotic proteasomes.

It localises to the cytoplasm. It catalyses the reaction Hydrolysis of proteins to small peptides in the presence of ATP and magnesium. alpha-casein is the usual test substrate. In the absence of ATP, only oligopeptides shorter than five residues are hydrolyzed (such as succinyl-Leu-Tyr-|-NHMec, and Leu-Tyr-Leu-|-Tyr-Trp, in which cleavage of the -Tyr-|-Leu- and -Tyr-|-Trp bonds also occurs).. Cleaves peptides in various proteins in a process that requires ATP hydrolysis. Has a chymotrypsin-like activity. Plays a major role in the degradation of misfolded proteins. This chain is ATP-dependent Clp protease proteolytic subunit, found in Neorickettsia sennetsu (strain ATCC VR-367 / Miyayama) (Ehrlichia sennetsu).